Here is a 219-residue protein sequence, read N- to C-terminus: Mucosal pentraxin (219 aa).

An N-terminal signal peptide occupies residues 1-19 (MEKLIVGTLLLTVLSGGIS). A Pentraxin (PTX) domain is found at 24 to 219 (DGKAFIFPQE…YVVTKPKLWT (196 aa)). Cysteines 55 and 114 form a disulfide. Residues D77, N78, E155, Q156, D157, and Q167 each contribute to the Ca(2+) site.

Belongs to the pentraxin family. Homopentamer. Pentraxin (or pentaxin) have a discoid arrangement of 5 non-covalently bound subunits. Ca(2+) serves as cofactor. In terms of tissue distribution, expression is restricted to small intestine, stomach and colon. Within colon, expressed in epithelial cells located within the lower to mid region of transverse and distal crypts, but not in proximal colon.

The protein resides in the secreted. This is Mucosal pentraxin (Mptx1) from Rattus norvegicus (Rat).